A 150-amino-acid chain; its full sequence is 3-hydroxyacyl-[acyl-carrier-protein] dehydratase FabZ (150 aa).

The active site involves H54.

It belongs to the thioester dehydratase family. FabZ subfamily.

Its subcellular location is the cytoplasm. It catalyses the reaction a (3R)-hydroxyacyl-[ACP] = a (2E)-enoyl-[ACP] + H2O. Its function is as follows. Involved in unsaturated fatty acids biosynthesis. Catalyzes the dehydration of short chain beta-hydroxyacyl-ACPs and long chain saturated and unsaturated beta-hydroxyacyl-ACPs. In Vibrio atlanticus (strain LGP32) (Vibrio splendidus (strain Mel32)), this protein is 3-hydroxyacyl-[acyl-carrier-protein] dehydratase FabZ.